A 174-amino-acid polypeptide reads, in one-letter code: Shikimate kinase 2 (174 aa).

12-17 (GCGKTT) is an ATP binding site. Residues T16 and D32 each contribute to the Mg(2+) site. Substrate contacts are provided by D34, R58, and G79. Residues 112-126 (QAAPEEDLRPTLTGK) are LID domain. R120 contacts ATP. Residue R139 participates in substrate binding.

The protein belongs to the shikimate kinase family. AroL subfamily. In terms of assembly, monomer. Mg(2+) is required as a cofactor.

The protein localises to the cytoplasm. The enzyme catalyses shikimate + ATP = 3-phosphoshikimate + ADP + H(+). The protein operates within metabolic intermediate biosynthesis; chorismate biosynthesis; chorismate from D-erythrose 4-phosphate and phosphoenolpyruvate: step 5/7. In terms of biological role, catalyzes the specific phosphorylation of the 3-hydroxyl group of shikimic acid using ATP as a cosubstrate. This Shigella boydii serotype 18 (strain CDC 3083-94 / BS512) protein is Shikimate kinase 2.